The sequence spans 115 residues: Large ribosomal subunit protein bL19 (115 aa).

The protein belongs to the bacterial ribosomal protein bL19 family.

Functionally, this protein is located at the 30S-50S ribosomal subunit interface and may play a role in the structure and function of the aminoacyl-tRNA binding site. This is Large ribosomal subunit protein bL19 from Enterobacter sp. (strain 638).